The chain runs to 516 residues: 2,3-bisphosphoglycerate-independent phosphoglycerate mutase (516 aa).

Positions 15 and 65 each coordinate Mn(2+). Catalysis depends on serine 65, which acts as the Phosphoserine intermediate. Substrate-binding positions include histidine 126, arginine 156–aspartate 157, arginine 188, arginine 194, arginine 263–arginine 266, and lysine 336. Aspartate 403, histidine 407, aspartate 444, histidine 445, and histidine 463 together coordinate Mn(2+).

This sequence belongs to the BPG-independent phosphoglycerate mutase family. Monomer. Mn(2+) serves as cofactor.

The catalysed reaction is (2R)-2-phosphoglycerate = (2R)-3-phosphoglycerate. It participates in carbohydrate degradation; glycolysis; pyruvate from D-glyceraldehyde 3-phosphate: step 3/5. Its function is as follows. Catalyzes the interconversion of 2-phosphoglycerate and 3-phosphoglycerate. This Francisella tularensis subsp. holarctica (strain OSU18) protein is 2,3-bisphosphoglycerate-independent phosphoglycerate mutase.